A 383-amino-acid polypeptide reads, in one-letter code: MESGSNSTSCPMAFAGDNSDGPMCPMMMMMMPVITSHQQHHGHDQQHQHQQQHDGYAYQSHHQHSSLLFLQSLTPPSQEAKNKVRSSCSPSSGAPAYSFMEINHQNELLAGGLQSPVLSSLLVKAKIMAHPHYHRLLLAYVNCQKVGAPPEVQARLEETCSSAAAAAASMGPTGSLGEDPGLDQFMEAYCEMLVKYEQELSKPFKEAMVFLQHVECQFKSLSLSSPSSLGYGEAAIERNNNGSSEEEVDMNNEFVDPQAEDRELKGQLLRKYSGYLGSLKQEFMKKRKKGKLPKEARQQLLDWWSRHYKWPYPSEQQKLALAESTGLDQKQINNWFINQRKRHWKPSEDMQFVVMDATHPLHYFMGNVLGNPFPIDHISGTML.

The interval 37 to 58 is disordered; the sequence is HQQHHGHDQQHQHQQQHDGYAY. The 21-residue stretch at 263–283 folds into the ELK domain; it reads ELKGQLLRKYSGYLGSLKQEF. The segment at residues 284–347 is a DNA-binding region (homeobox; TALE-type); that stretch reads MKKRKKGKLP…NQRKRHWKPS (64 aa).

Belongs to the TALE/KNOX homeobox family.

It localises to the nucleus. Its function is as follows. Required for shoot apical meristem formation during embryogenesis. Probably binds to the DNA sequence 5'-TGAC-3'. This is Homeobox protein SHOOT MERISTEMLESS (STM) from Brassica oleracea (Wild cabbage).